Here is a 291-residue protein sequence, read N- to C-terminus: Probable ABC transporter permease protein PH1038 (291 aa).

8 consecutive transmembrane segments (helical) span residues 7–27 (PFFF…YPVF), 75–95 (IVWI…FALL), 106–126 (IIKS…GLII), 133–153 (GAGV…AITW), 160–180 (ALFS…MLMY), 208–228 (FVIW…TLLW), 232–252 (IFDI…MVLA), and 267–287 (YAAV…LWLI). The region spanning 71–286 (LIHNIVWIAI…ALTFIPALWL (216 aa)) is the ABC transmembrane type-1 domain.

Belongs to the binding-protein-dependent transport system permease family. MalFG subfamily.

It is found in the cell membrane. Probably part of a binding-protein-dependent transport system PH1036/38/39. Probably responsible for the translocation of the substrate across the membrane. The polypeptide is Probable ABC transporter permease protein PH1038 (Pyrococcus horikoshii (strain ATCC 700860 / DSM 12428 / JCM 9974 / NBRC 100139 / OT-3)).